We begin with the raw amino-acid sequence, 310 residues long: Malate dehydrogenase (310 aa).

NAD(+) is bound by residues 7–12 (GAGHVG) and D32. 2 residues coordinate substrate: R81 and R87. Residues N94 and 117–119 (VSN) contribute to the NAD(+) site. Residues N119 and R150 each contribute to the substrate site. H174 serves as the catalytic Proton acceptor.

This sequence belongs to the LDH/MDH superfamily. MDH type 3 family.

It catalyses the reaction (S)-malate + NAD(+) = oxaloacetate + NADH + H(+). Its function is as follows. Catalyzes the reversible oxidation of malate to oxaloacetate. The chain is Malate dehydrogenase from Chlorobium phaeobacteroides (strain BS1).